The sequence spans 49 residues: MRNNIILGNNETGERIYLTSKNKRNTPDRLQLKKYSPKLRKRVVFTEVK.

It belongs to the bacterial ribosomal protein bL33 family.

This Lacticaseibacillus casei (strain BL23) (Lactobacillus casei) protein is Large ribosomal subunit protein bL33.